Consider the following 78-residue polypeptide: Small ribosomal subunit protein bS18 (78 aa).

It belongs to the bacterial ribosomal protein bS18 family. Part of the 30S ribosomal subunit. Forms a tight heterodimer with protein bS6.

In terms of biological role, binds as a heterodimer with protein bS6 to the central domain of the 16S rRNA, where it helps stabilize the platform of the 30S subunit. The protein is Small ribosomal subunit protein bS18 of Pediococcus pentosaceus (strain ATCC 25745 / CCUG 21536 / LMG 10740 / 183-1w).